A 315-amino-acid polypeptide reads, in one-letter code: Protein sprouty homolog 2 (315 aa).

Residues Met1–Leu15 show a composition bias toward polar residues. 2 disordered regions span residues Met1–His39 and Asn51–Phe140. Basic and acidic residues predominate over residues Asp20 to Asp32. Over residues Ser108–Phe140 the composition is skewed to low complexity. The required for interaction with CAV1 stretch occupies residues Ser118–Thr315. The 115-residue stretch at Arg177–Cys291 folds into the SPR domain. The tract at residues Cys178–Thr315 is required for interaction with TESK1.

Belongs to the sprouty family. In terms of assembly, forms heterodimers with SPRY1. Forms a tripartite complex containing GAB1, METTL13 and SPRY2. Within the complex interacts with METTL13. Interacts with RAF1. Interacts (via C-terminus) with TESK1 (via C-terminus); the interaction disrupts SPRY2 interaction with GRB2, potentially via disruption of SPRY2 serine dephosphorylation. Interacts with PPP2R1A/PP2A-A and PPP2CA/PP2A-C; the interaction with PPP2CA/PP2A-C is inhibited by interaction with TESK1, possibly by vesicular sequestration of SPRY2. Inhibition of the interaction with the serine/threonine-protein phosphatase 2A (PP2A) holoenzyme results in loss of PP2A-mediated dephosphorylation, resulting in the loss of SPRY2 interaction with GRB2. Interacts with GRB2. Interacts with CBL/C-CBL; the interaction inhibits CBL-mediated ubiquitination of EGFR. Interacts (via C-terminus) with CAV1 (via C-terminus). In terms of processing, cleaved at Pro-144 by the prolyl endopeptidase FAP (seprase) activity (in vitro).

It localises to the cytoplasm. The protein resides in the cytoskeleton. The protein localises to the cell projection. It is found in the ruffle membrane. Antagonist of fibroblast growth factor (FGF) pathways via inhibition of FGF-mediated phosphorylation of ERK1/2. Thereby acts as an antagonist of FGF-induced retinal lens fiber differentiation, may inhibit limb bud outgrowth and may negatively modulate respiratory organogenesis. Inhibits TGFB-induced epithelial-to-mesenchymal transition in retinal lens epithelial cells. Inhibits CBL/C-CBL-mediated EGFR ubiquitination. The polypeptide is Protein sprouty homolog 2 (SPRY2) (Macaca fascicularis (Crab-eating macaque)).